Consider the following 407-residue polypeptide: Peptidase T (407 aa).

Zn(2+) is bound at residue His81. The active site involves Asp83. A Zn(2+)-binding site is contributed by Asp142. The active-site Proton acceptor is the Glu176. Glu177, Asp199, and His381 together coordinate Zn(2+).

The protein belongs to the peptidase M20B family. It depends on Zn(2+) as a cofactor.

It localises to the cytoplasm. The enzyme catalyses Release of the N-terminal residue from a tripeptide.. Functionally, cleaves the N-terminal amino acid of tripeptides. The sequence is that of Peptidase T from Streptococcus pneumoniae (strain P1031).